A 156-amino-acid polypeptide reads, in one-letter code: Small ribosomal subunit protein uS7 (156 aa).

Belongs to the universal ribosomal protein uS7 family. Part of the 30S ribosomal subunit. Contacts proteins S9 and S11.

In terms of biological role, one of the primary rRNA binding proteins, it binds directly to 16S rRNA where it nucleates assembly of the head domain of the 30S subunit. Is located at the subunit interface close to the decoding center, probably blocks exit of the E-site tRNA. This chain is Small ribosomal subunit protein uS7, found in Bordetella petrii (strain ATCC BAA-461 / DSM 12804 / CCUG 43448).